An 80-amino-acid polypeptide reads, in one-letter code: Conotoxin Cl10.1 (80 aa).

The signal sequence occupies residues 1-20 (MTTLGMTMLVLLLLLPLATC). Positions 21 to 36 (LGDGERSPWDSLLRAL) are excised as a propeptide.

In terms of processing, contains 4 disulfide bonds. In terms of tissue distribution, expressed by the venom duct.

It localises to the secreted. The protein is Conotoxin Cl10.1 of Californiconus californicus (California cone).